The chain runs to 504 residues: Aspartyl/glutamyl-tRNA(Asn/Gln) amidotransferase subunit B (504 aa).

It belongs to the GatB/GatE family. GatB subfamily. In terms of assembly, heterotrimer of A, B and C subunits.

The enzyme catalyses L-glutamyl-tRNA(Gln) + L-glutamine + ATP + H2O = L-glutaminyl-tRNA(Gln) + L-glutamate + ADP + phosphate + H(+). It carries out the reaction L-aspartyl-tRNA(Asn) + L-glutamine + ATP + H2O = L-asparaginyl-tRNA(Asn) + L-glutamate + ADP + phosphate + 2 H(+). Allows the formation of correctly charged Asn-tRNA(Asn) or Gln-tRNA(Gln) through the transamidation of misacylated Asp-tRNA(Asn) or Glu-tRNA(Gln) in organisms which lack either or both of asparaginyl-tRNA or glutaminyl-tRNA synthetases. The reaction takes place in the presence of glutamine and ATP through an activated phospho-Asp-tRNA(Asn) or phospho-Glu-tRNA(Gln). In Rhodococcus opacus (strain B4), this protein is Aspartyl/glutamyl-tRNA(Asn/Gln) amidotransferase subunit B.